A 77-amino-acid chain; its full sequence is uncharacterized protein (77 aa).

This is an uncharacterized protein from Dictyostelium discoideum (Social amoeba).